We begin with the raw amino-acid sequence, 451 residues long: Signal recognition particle protein (451 aa).

Residues 107-114 (GLQGSGKT), 190-194 (DTAGR), and 248-251 (TKTD) contribute to the GTP site.

It belongs to the GTP-binding SRP family. SRP54 subfamily. As to quaternary structure, part of the signal recognition particle protein translocation system, which is composed of SRP and FtsY. SRP is a ribonucleoprotein composed of Ffh and a 4.5S RNA molecule.

The protein resides in the cytoplasm. The catalysed reaction is GTP + H2O = GDP + phosphate + H(+). Functionally, involved in targeting and insertion of nascent membrane proteins into the cytoplasmic membrane. Binds to the hydrophobic signal sequence of the ribosome-nascent chain (RNC) as it emerges from the ribosomes. The SRP-RNC complex is then targeted to the cytoplasmic membrane where it interacts with the SRP receptor FtsY. Interaction with FtsY leads to the transfer of the RNC complex to the Sec translocase for insertion into the membrane, the hydrolysis of GTP by both Ffh and FtsY, and the dissociation of the SRP-FtsY complex into the individual components. This is Signal recognition particle protein from Buchnera aphidicola subsp. Acyrthosiphon pisum (strain APS) (Acyrthosiphon pisum symbiotic bacterium).